The sequence spans 310 residues: tRNA pseudouridine synthase B (310 aa).

Aspartate 47 serves as the catalytic Nucleophile.

It belongs to the pseudouridine synthase TruB family. Type 1 subfamily.

The catalysed reaction is uridine(55) in tRNA = pseudouridine(55) in tRNA. Its function is as follows. Responsible for synthesis of pseudouridine from uracil-55 in the psi GC loop of transfer RNAs. The chain is tRNA pseudouridine synthase B from Caulobacter sp. (strain K31).